The chain runs to 671 residues: UvrABC system protein B (671 aa).

A Helicase ATP-binding domain is found at 25 to 412 (EGIDAGLAHQ…AGRVVEQVVR (388 aa)). Position 38-45 (38-45 (GVTGSGKT)) interacts with ATP. Residues 91-114 (YYDYYQPEAYVPSSDTFIEKDASI) carry the Beta-hairpin motif. The 167-residue stretch at 429–595 (QVDDLLSEIH…GVFKDVADIM (167 aa)) folds into the Helicase C-terminal domain. A disordered region spans residues 600-624 (VPGSRSKKRKGMAKAAEENARYENE). A compositionally biased stretch (basic and acidic residues) spans 614-624 (AAEENARYENE). Positions 632–667 (NKRIRQLEEKMYQLARDLEFEAAAQMRDEIGKLRER) constitute a UVR domain.

This sequence belongs to the UvrB family. As to quaternary structure, forms a heterotetramer with UvrA during the search for lesions. Interacts with UvrC in an incision complex.

The protein resides in the cytoplasm. In terms of biological role, the UvrABC repair system catalyzes the recognition and processing of DNA lesions. A damage recognition complex composed of 2 UvrA and 2 UvrB subunits scans DNA for abnormalities. Upon binding of the UvrA(2)B(2) complex to a putative damaged site, the DNA wraps around one UvrB monomer. DNA wrap is dependent on ATP binding by UvrB and probably causes local melting of the DNA helix, facilitating insertion of UvrB beta-hairpin between the DNA strands. Then UvrB probes one DNA strand for the presence of a lesion. If a lesion is found the UvrA subunits dissociate and the UvrB-DNA preincision complex is formed. This complex is subsequently bound by UvrC and the second UvrB is released. If no lesion is found, the DNA wraps around the other UvrB subunit that will check the other stand for damage. This chain is UvrABC system protein B, found in Pseudomonas savastanoi pv. phaseolicola (strain 1448A / Race 6) (Pseudomonas syringae pv. phaseolicola (strain 1448A / Race 6)).